The sequence spans 442 residues: PCI domain-containing protein C1105.07c (442 aa).

A PCI domain is found at 224–415; the sequence is VTFRYYLGRC…STLVLKKDPS (192 aa).

The protein localises to the cytoplasm. It is found in the nucleus envelope. This chain is PCI domain-containing protein C1105.07c, found in Schizosaccharomyces pombe (strain 972 / ATCC 24843) (Fission yeast).